The following is a 437-amino-acid chain: uncharacterized protein (437 aa).

Residues 47–67 (LLIILIGFILLSSISAIQIDA) form a helical membrane-spanning segment.

It localises to the membrane. This is an uncharacterized protein from Methanocaldococcus jannaschii (strain ATCC 43067 / DSM 2661 / JAL-1 / JCM 10045 / NBRC 100440) (Methanococcus jannaschii).